The primary structure comprises 1113 residues: Protein MGA2 (1113 aa).

Positions 91-114 are disordered; it reads TPLEEEMESNRALKEEEEDEHENK. Serine 255 carries the phosphoserine modification. Polar residues-rich tracts occupy residues 344 to 357 and 437 to 452; these read DTTK…SSRR and HIPS…SESF. 2 disordered regions span residues 344 to 376 and 437 to 462; these read DTTK…NNQL and HIPS…NDNP. Residue serine 467 is modified to Phosphoserine. Residues 530 to 610 enclose the IPT/TIG domain; sequence PSINRVIPSQ…NENNNDDLPQ (81 aa). Residues 658–687 form a disordered region; the sequence is IVGNDSPDSGTNGNSCSKSTGPSPNQHSMN. The segment covering 663–687 has biased composition (polar residues); it reads SPDSGTNGNSCSKSTGPSPNQHSMN. ANK repeat units follow at residues 719–748 and 752–781; these read LGRT…RVND and FGLT…NYSL. Residues 1037 to 1054 form a helical membrane-spanning segment; that stretch reads MLIFFWIPLTLLLLTWFI.

The protein localises to the membrane. This chain is Protein MGA2 (MGA2), found in Saccharomyces cerevisiae (strain ATCC 204508 / S288c) (Baker's yeast).